A 610-amino-acid chain; its full sequence is UvrABC system protein C (610 aa).

The GIY-YIG domain occupies 16 to 94 (SQPGVYRMYD…IKLYQPRYNV (79 aa)). Residues 204 to 239 (QQVLTQLITRMEEASQQLHFEDAARIRDQIQAVRRV) enclose the UVR domain.

Belongs to the UvrC family. As to quaternary structure, interacts with UvrB in an incision complex.

The protein localises to the cytoplasm. In terms of biological role, the UvrABC repair system catalyzes the recognition and processing of DNA lesions. UvrC both incises the 5' and 3' sides of the lesion. The N-terminal half is responsible for the 3' incision and the C-terminal half is responsible for the 5' incision. The sequence is that of UvrABC system protein C from Yersinia pseudotuberculosis serotype I (strain IP32953).